The chain runs to 1527 residues: ATP-binding cassette sub-family C member 3 (1527 aa).

Over 1–32 (MDALCGSGELGSKFWDSNLSVHTENPDLTPCF) the chain is Extracellular. Asparagine 18 carries an N-linked (GlcNAc...) asparagine glycan. The chain crosses the membrane as a helical span at residues 33–53 (QNSLLAWVPCIYLWVALPCYL). The Cytoplasmic portion of the chain corresponds to 54–73 (LYLRHHCRGYIILSHLSKLK). A helical transmembrane segment spans residues 74–94 (MVLGVLLWCVSWADLFYSFHG). At 95-99 (LVHGR) the chain is on the extracellular side. A helical transmembrane segment spans residues 100 to 120 (APAPVFFVTPLVVGVTMLLAT). The Cytoplasmic portion of the chain corresponds to 121 to 132 (LLIQYERLQGVQ). Residues 133-153 (SSGVLIIFWFLCVVCAIVPFR) traverse the membrane as a helical segment. Topologically, residues 154 to 171 (SKILLAKAEGEISDPFRF) are extracellular. Residues 172-192 (TTFYIHFALVLSALILACFRE) form a helical membrane-spanning segment. Topologically, residues 193–302 (KPPFFSAKNV…RPRKPSFLKA (110 aa)) are cytoplasmic. The helical transmembrane segment at 303–323 (LLATFGSSFLISACFKLIQDL) threads the bilayer. One can recognise an ABC transmembrane type-1 1 domain in the interval 311 to 594 (FLISACFKLI…LPQLISNLTQ (284 aa)). Residues 324–349 (LSFINPQLLSILIRFISNPMAPSWWG) are Extracellular-facing. Residues 350-370 (FLVAGLMFLCSMMQSLILQHY) traverse the membrane as a helical segment. At 371–426 (YHYIFVTGVKFRTGIMGVIYRKALVITNSVKRASTVGEIVNLMSVDAQRFMDLAPF) the chain is on the cytoplasmic side. The helical transmembrane segment at 427–447 (LNLLWSAPLQIILAIYFLWQN) threads the bilayer. Over 448–450 (LGP) the chain is Extracellular. The chain crosses the membrane as a helical span at residues 451-471 (SVLAGVAFMVLLIPLNGAVAV). At 472–533 (KMRAFQVKQM…LLRTAAYLHT (62 aa)) the chain is on the cytoplasmic side. A helical transmembrane segment spans residues 534–554 (TTTFTWMCSPFLVTLITLWVY). Residues 555–576 (VYVDPNNVLDAEKAFVSVSLFN) are Extracellular-facing. A helical transmembrane segment spans residues 577–597 (ILRLPLNMLPQLISNLTQASV). Over 598–963 (SLKRIQQFLS…VELSVFWDYA (366 aa)) the chain is Cytoplasmic. Residues 629–851 (IHSGTFTWAQ…NGSFANFLCN (223 aa)) form the ABC transporter 1 domain. 661–668 (GPVGCGKS) is a binding site for ATP. Serine 908 and serine 911 each carry phosphoserine. Residues 910-932 (LSSDGEGQGRPVPRRHLGPSEKV) form a disordered region. Residues 964–984 (KAVGLCTTLAICLLYVGQSAA) form a helical membrane-spanning segment. The 282-residue stretch at 971-1252 (TLAICLLYVG…MIRMMSDLES (282 aa)) folds into the ABC transmembrane type-1 2 domain. Topologically, residues 985-1021 (AIGANVWLSAWTNDAMADSRQNNTSLRLGVYAALGIL) are extracellular. Asparagine 1006 and asparagine 1007 each carry an N-linked (GlcNAc...) asparagine glycan. A helical transmembrane segment spans residues 1022–1042 (QGFLVMLAAMAMAAGGIQAAR). The Cytoplasmic portion of the chain corresponds to 1043–1085 (VLHQALLHNKIRSPQSFFDTTPSGRILNCFSKDIYVVDEVLAP). A helical transmembrane segment spans residues 1086-1106 (VILMLLNSFFNAISTLVVIMA). Residue serine 1107 is a topological domain, extracellular. Residues 1108-1128 (TPLFTVVILPLAVLYTLVQRF) form a helical membrane-spanning segment. Residues 1129–1199 (YAATSRQLKR…ISNRWLSIGV (71 aa)) are Cytoplasmic-facing. A helical transmembrane segment spans residues 1200-1220 (EFVGNCVVLFAALFAVIGRSS). Over 1221 to 1222 (LN) the chain is Extracellular. Residues 1223-1243 (PGLVGLSVSYSLQVTFALNWM) form a helical membrane-spanning segment. Over 1244–1527 (IRMMSDLESN…YGMARDAGLA (284 aa)) the chain is Cytoplasmic. In terms of domain architecture, ABC transporter 2 spans 1291–1523 (FRNYSVRYRP…RGIFYGMARD (233 aa)). 1323–1330 (GRTGAGKS) is an ATP binding site.

Belongs to the ABC transporter superfamily. ABCC family. Conjugate transporter (TC 3.A.1.208) subfamily. In terms of tissue distribution, mainly expressed in the liver. Also expressed in small intestine, colon, prostate, testis, brain and at a lower level in the kidney. In testis, localized to peritubular myoid cells, Leydig cells, along the basal membrane of Sertoli cells and moderately in the adluminal compartment of the seminiferous tubules.

The protein resides in the basolateral cell membrane. It localises to the basal cell membrane. The catalysed reaction is taurocholate(in) + ATP + H2O = taurocholate(out) + ADP + phosphate + H(+). It carries out the reaction glycocholate(in) + ATP + H2O = glycocholate(out) + ADP + phosphate + H(+). The enzyme catalyses taurolithocholate 3-sulfate(in) + ATP + H2O = taurolithocholate 3-sulfate(out) + ADP + phosphate + H(+). It catalyses the reaction taurochenodeoxycholate 3-sulfate(in) + ATP + H2O = taurochenodeoxycholate 3-sulfate(out) + ADP + phosphate + H(+). The catalysed reaction is an S-substituted glutathione(in) + ATP + H2O = an S-substituted glutathione(out) + ADP + phosphate + H(+). It carries out the reaction ATP + H2O + xenobioticSide 1 = ADP + phosphate + xenobioticSide 2.. The enzyme catalyses 17beta-estradiol 17-O-(beta-D-glucuronate)(in) + ATP + H2O = 17beta-estradiol 17-O-(beta-D-glucuronate)(out) + ADP + phosphate + H(+). It catalyses the reaction dehydroepiandrosterone 3-sulfate(in) + ATP + H2O = dehydroepiandrosterone 3-sulfate(out) + ADP + phosphate + H(+). The catalysed reaction is leukotriene C4(in) + ATP + H2O = leukotriene C4(out) + ADP + phosphate + H(+). It carries out the reaction (4Z,15Z)-bilirubin IXalpha C8-beta-D-glucuronoside(in) + ATP + H2O = (4Z,15Z)-bilirubin IXalpha C8-beta-D-glucuronoside(out) + ADP + phosphate + H(+). The enzyme catalyses (4Z,15Z)-bilirubin IXalpha C8,C12-beta-D-bisglucuronoside(in) + ATP + H2O = (4Z,15Z)-bilirubin IXalpha C8,C12-beta-D-bisglucuronoside(out) + ADP + phosphate + H(+). Its function is as follows. ATP-dependent transporter of the ATP-binding cassette (ABC) family that binds and hydrolyzes ATP to enable active transport of various substrates including many drugs, toxicants and endogenous compound across cell membranes. Transports glucuronide conjugates such as bilirubin diglucuronide, estradiol-17-beta-o-glucuronide and GSH conjugates such as leukotriene C4 (LTC4). Transports also various bile salts (taurocholate, glycocholate, taurochenodeoxycholate-3-sulfate, taurolithocholate- 3-sulfate). Does not contribute substantially to bile salt physiology but provides an alternative route for the export of bile acids and glucuronides from cholestatic hepatocytes. May contribute to regulate the transport of organic compounds in testes across the blood-testis-barrier. Can confer resistance to various anticancer drugs, methotrexate, tenoposide and etoposide, by decreasing accumulation of these drugs in cells. This Homo sapiens (Human) protein is ATP-binding cassette sub-family C member 3.